The following is a 151-amino-acid chain: Deoxyuridine 5'-triphosphate nucleotidohydrolase (151 aa).

Residues 70 to 72, N83, 87 to 89, and M97 each bind substrate; these read RSG and LID.

The protein belongs to the dUTPase family. The cofactor is Mg(2+).

The enzyme catalyses dUTP + H2O = dUMP + diphosphate + H(+). Its pathway is pyrimidine metabolism; dUMP biosynthesis; dUMP from dCTP (dUTP route): step 2/2. In terms of biological role, this enzyme is involved in nucleotide metabolism: it produces dUMP, the immediate precursor of thymidine nucleotides and it decreases the intracellular concentration of dUTP so that uracil cannot be incorporated into DNA. In Sodalis glossinidius (strain morsitans), this protein is Deoxyuridine 5'-triphosphate nucleotidohydrolase.